Consider the following 320-residue polypeptide: 1-aminocyclopropane-1-carboxylate oxidase (320 aa).

The 101-residue stretch at 156-256 (PTFGTKVSNY…RMSIASFYNP (101 aa)) folds into the Fe2OG dioxygenase domain. 3 residues coordinate Fe cation: His-180, Asp-182, and His-237.

This sequence belongs to the iron/ascorbate-dependent oxidoreductase family. Fe cation serves as cofactor.

The catalysed reaction is 1-aminocyclopropane-1-carboxylate + L-ascorbate + O2 = ethene + L-dehydroascorbate + hydrogen cyanide + CO2 + 2 H2O. Its pathway is alkene biosynthesis; ethylene biosynthesis via S-adenosyl-L-methionine; ethylene from S-adenosyl-L-methionine: step 2/2. In Brassica juncea (Indian mustard), this protein is 1-aminocyclopropane-1-carboxylate oxidase (ACO).